Consider the following 263-residue polypeptide: Gap junction beta-6 protein (263 aa).

Residues Met-1–Ser-19 are Cytoplasmic-facing. A helical transmembrane segment spans residues Ile-20–Ala-40. The Extracellular segment spans residues Glu-41–Arg-75. Residues Leu-76–Ala-96 traverse the membrane as a helical segment. The Cytoplasmic portion of the chain corresponds to Tyr-97 to Thr-137. Residues Cys-138 to Tyr-158 traverse the membrane as a helical segment. Residues Asp-159 to Thr-189 are Extracellular-facing. A helical membrane pass occupies residues Val-190 to Leu-210. Residues Cys-211–Ser-263 lie on the Cytoplasmic side of the membrane.

The protein belongs to the connexin family. Beta-type (group I) subfamily. A connexon is composed of a hexamer of connexins. As to expression, exclusively expressed in the cochlea of the inner ear, where it is found in cells of the tegmentum vasculosum, cuboidal cells, supporting cells and clear cells.

It is found in the cell membrane. The protein resides in the cell junction. Its subcellular location is the gap junction. Functionally, one gap junction consists of a cluster of closely packed pairs of transmembrane channels, the connexons, through which materials of low MW diffuse from one cell to a neighboring cell. This Gallus gallus (Chicken) protein is Gap junction beta-6 protein (GJB6).